The primary structure comprises 391 residues: MAKSKFERNKPHVNIGTIGHVDHGKTSLTAAITKYFGEFKAYDQIDAAPEEKARGITISTAHVEYETPNRHYAHVDCPGHADYVKNMITGAAQMDGAILVVSAADGPMPQTREHILLARQVGVPAIVVFLNKVDQVDDAELLELVELEVRELLSSYEFPGDDIPIVKGSALAALEDSDKKIGEDAIRELMAAVDAYIPTPERPIDQPFLMPIEDVFSISGRGTVVTGRVERGIVKVGEEIEIVGIRPTTKTTCTGVEMFRKLLDQGQAGDNIGALLRGVDRNGVERGQILCKPGSVKPHRKFKAEAYILTKEEGGRHTPFFTNYRPQFYFRTTDVTGIVTLPEGTEMVMPGDNVTVDVELIVPIAMEEKLRFAIREGGRTVGAGIVASIVE.

A tr-type G domain is found at Lys10–Glu201. The interval Gly19–Thr26 is G1. Gly19–Thr26 serves as a coordination point for GTP. Thr26 is a binding site for Mg(2+). A G2 region spans residues Gly55–Ser59. The interval Asp76–Gly79 is G3. GTP-binding positions include Asp76–His80 and Asn131–Asp134. The interval Asn131–Asp134 is G4. A G5 region spans residues Ser169–Leu171.

The protein belongs to the TRAFAC class translation factor GTPase superfamily. Classic translation factor GTPase family. EF-Tu/EF-1A subfamily. As to quaternary structure, monomer.

It localises to the cytoplasm. The catalysed reaction is GTP + H2O = GDP + phosphate + H(+). GTP hydrolase that promotes the GTP-dependent binding of aminoacyl-tRNA to the A-site of ribosomes during protein biosynthesis. The chain is Elongation factor Tu from Rhizobium meliloti (strain 1021) (Ensifer meliloti).